Here is a 331-residue protein sequence, read N- to C-terminus: Lipoate-protein ligase LplJ (331 aa).

Residues 27-214 (DPEQQYLLFY…HIFNTNDVGN (188 aa)) enclose the BPL/LPL catalytic domain. Residues Arg69, 74-77 (GAVY), and Lys131 contribute to the ATP site. Lys131 contacts (R)-lipoate.

Belongs to the LplA family.

The protein resides in the cytoplasm. The enzyme catalyses L-lysyl-[lipoyl-carrier protein] + (R)-lipoate + ATP = N(6)-[(R)-lipoyl]-L-lysyl-[lipoyl-carrier protein] + AMP + diphosphate + H(+). Its pathway is protein modification; protein lipoylation via exogenous pathway; protein N(6)-(lipoyl)lysine from lipoate: step 1/2. It functions in the pathway protein modification; protein lipoylation via exogenous pathway; protein N(6)-(lipoyl)lysine from lipoate: step 2/2. Catalyzes both the ATP-dependent activation of exogenously supplied lipoate to lipoyl-AMP and the transfer of the activated lipoyl onto the lipoyl domains of lipoate-dependent enzymes. Is also able to use octanoate as substrate. In Bacillus subtilis (strain 168), this protein is Lipoate-protein ligase LplJ (lplJ).